Reading from the N-terminus, the 499-residue chain is Glycerol kinase (499 aa).

Residue Thr-13 participates in ADP binding. Residues Thr-13, Thr-14, and Ser-15 each coordinate ATP. Thr-13 is a binding site for sn-glycerol 3-phosphate. Arg-17 contributes to the ADP binding site. Residues Arg-83, Glu-84, Tyr-135, and Asp-245 each contribute to the sn-glycerol 3-phosphate site. Glycerol-binding residues include Arg-83, Glu-84, Tyr-135, Asp-245, and Gln-246. The ADP site is built by Thr-267 and Gly-310. Thr-267, Gly-310, Gln-314, and Gly-411 together coordinate ATP. Residues Gly-411 and Asn-415 each contribute to the ADP site.

Belongs to the FGGY kinase family.

It carries out the reaction glycerol + ATP = sn-glycerol 3-phosphate + ADP + H(+). The protein operates within polyol metabolism; glycerol degradation via glycerol kinase pathway; sn-glycerol 3-phosphate from glycerol: step 1/1. Its activity is regulated as follows. Inhibited by fructose 1,6-bisphosphate (FBP). Functionally, key enzyme in the regulation of glycerol uptake and metabolism. Catalyzes the phosphorylation of glycerol to yield sn-glycerol 3-phosphate. In Xanthomonas campestris pv. campestris (strain 8004), this protein is Glycerol kinase.